The chain runs to 703 residues: Probable ATP-dependent RNA helicase DHX35 (703 aa).

In terms of domain architecture, Helicase ATP-binding spans 64 to 229 (LYLIENYQTV…FNQNETSDPA (166 aa)). 77–84 (GETGCGKS) provides a ligand contact to ATP. The DEAH box signature appears at 176–179 (DEAH). The Helicase C-terminal domain occupies 261–438 (TVETVVKIHQ…PVILQLKALG (178 aa)).

This sequence belongs to the DEAD box helicase family. DEAH subfamily. Identified in the spliceosome C complex.

The catalysed reaction is ATP + H2O = ADP + phosphate + H(+). In terms of biological role, may be involved in pre-mRNA splicing. In Homo sapiens (Human), this protein is Probable ATP-dependent RNA helicase DHX35 (DHX35).